Reading from the N-terminus, the 462-residue chain is 3-deoxy-D-manno-octulosonic acid transferase (462 aa).

Residues 2 to 22 (MLLYYILSFILLPVYFIIIFI) form a helical; Signal-anchor membrane-spanning segment. In terms of domain architecture, RPE1 insert spans 47 to 90 (SLLDLQMSVNQEGFKVDTEHKATSYVYIHRNASLMYKLSLERSY). The active-site Proton acceptor is the glutamate 104. CMP contacts are provided by residues 308 to 309 (PR), 349 to 351 (FGE), and 374 to 377 (NILE).

The protein belongs to the glycosyltransferase group 1 family.

The protein localises to the cell inner membrane. The catalysed reaction is lipid IVA (E. coli) + CMP-3-deoxy-beta-D-manno-octulosonate = alpha-Kdo-(2-&gt;6)-lipid IVA (E. coli) + CMP + H(+). Its pathway is bacterial outer membrane biogenesis; LPS core biosynthesis. Involved in lipopolysaccharide (LPS) biosynthesis. Catalyzes the transfer of 3-deoxy-D-manno-octulosonate (Kdo) residue(s) from CMP-Kdo to lipid IV(A), the tetraacyldisaccharide-1,4'-bisphosphate precursor of lipid A. This chain is 3-deoxy-D-manno-octulosonic acid transferase (waaA), found in Rickettsia typhi (strain ATCC VR-144 / Wilmington).